The primary structure comprises 533 residues: Glucose-6-phosphate isomerase (533 aa).

E341 (proton donor) is an active-site residue. Residues H372 and K501 contribute to the active site.

It belongs to the GPI family.

The protein localises to the cytoplasm. The catalysed reaction is alpha-D-glucose 6-phosphate = beta-D-fructose 6-phosphate. It participates in carbohydrate biosynthesis; gluconeogenesis. It functions in the pathway carbohydrate degradation; glycolysis; D-glyceraldehyde 3-phosphate and glycerone phosphate from D-glucose: step 2/4. Functionally, catalyzes the reversible isomerization of glucose-6-phosphate to fructose-6-phosphate. This chain is Glucose-6-phosphate isomerase, found in Cereibacter sphaeroides (strain ATCC 17025 / ATH 2.4.3) (Rhodobacter sphaeroides).